Here is a 155-residue protein sequence, read N- to C-terminus: Ribosomal RNA large subunit methyltransferase H (155 aa).

S-adenosyl-L-methionine is bound by residues Leu72, Gly103, and 122–127 (LSPLTL).

This sequence belongs to the RNA methyltransferase RlmH family. Homodimer.

It is found in the cytoplasm. It catalyses the reaction pseudouridine(1915) in 23S rRNA + S-adenosyl-L-methionine = N(3)-methylpseudouridine(1915) in 23S rRNA + S-adenosyl-L-homocysteine + H(+). Its function is as follows. Specifically methylates the pseudouridine at position 1915 (m3Psi1915) in 23S rRNA. The polypeptide is Ribosomal RNA large subunit methyltransferase H (Aeromonas hydrophila subsp. hydrophila (strain ATCC 7966 / DSM 30187 / BCRC 13018 / CCUG 14551 / JCM 1027 / KCTC 2358 / NCIMB 9240 / NCTC 8049)).